The chain runs to 146 residues: Decarboxylase dmxR15 (146 aa).

Residues 31-126 (PGMSEGDYRN…MHDHEVFADT (96 aa)) form the EthD domain.

The protein belongs to the tpcK family.

The enzyme catalyses atrochrysone carboxylate + H(+) = atrochrysone + CO2. It participates in secondary metabolite biosynthesis. Its function is as follows. Decarboxylase; part of the gene cluster that mediates the biosynthesis of the dimeric xanthones cryptosporioptides. The pathway begins with the synthesis of atrochrysone thioester by the polyketide synthase dmx-nrPKS. The atrochrysone carboxyl ACP thioesterase dmxR1 then breaks the thioester bond and releases the atrochrysone carboxylic acid from dmx-nrPKS. Atrochrysone carboxylic acid is decarboxylated by the decarboxylase dmxR15, and oxidized by the anthrone oxygenase dmxR16 to yield emodin. Emodin is then reduced to emodin hydroquinone by the oxidoreductase dmxR7. A-ring reduction by the short chain dehydrogenase dmxR18, dehydration by the scytalone dehydratase-like protein dmxR17 and probable spontaneous re-oxidation, results in overall deoxygenation to chrysophanol. Baeyer-Villiger oxidation by the Baeyer-Villiger monooxygenase (BVMO) dmxR6 then yields monodictylactone in equilibrium with monodictyphenone. In the case of the cryptosporioptides biosynthesis, monodictylactone is reduced at C-12 to an alcohol (by the short chain dehydrogenases dmxR12 or dmxR8) and hydroxylated at C-5 by dmxR9, yielding the electron-rich aromatic which could eliminate H(2)O to form the ortho-quinonemethide, followed by tautomerisation to paraquinone and complete the formal reduction to produce the 10-methylgroup. Conjugate addition of C-4a-OH to the resulting paraquinone by the monooxygenase dmxR10 then gives cyclohexadienone, which is then reduced at C-5 by the short chain dehydrogenase dmxR3 to give the dihydroxanthone. The 6,7-epoxide in the cryptosporioptides could be introduced by the cytochrome P450 monooxygenase dmxL3. The highly reducing PKS dmxL2 manufactures butyrate, which is further carboxylated by dmxL1 to form ethylmalonate. It is not yet clear whether the carboxylation occurs while the butyrate is attached to the ACP of dmxL2, but this unusual fungal metabolite could then be esterified to O-5 by the O-acetyltransferase dmxR13. Finally, dimerization performed by dmxR5 gives the observed dimers cryptosporioptides A, B and C as the final products of the pathway. This chain is Decarboxylase dmxR15, found in Cryptosporiopsis sp. (strain 8999).